We begin with the raw amino-acid sequence, 315 residues long: Ribose-phosphate pyrophosphokinase (315 aa).

ATP is bound by residues 37–39 (DGE) and 96–97 (RQ). Residues His-131 and Asp-170 each coordinate Mg(2+). Lys-194 is a catalytic residue. Residues Arg-196, Asp-220, and 224 to 228 (DTGGT) contribute to the D-ribose 5-phosphate site.

This sequence belongs to the ribose-phosphate pyrophosphokinase family. Class I subfamily. Homohexamer. Mg(2+) is required as a cofactor.

It is found in the cytoplasm. The enzyme catalyses D-ribose 5-phosphate + ATP = 5-phospho-alpha-D-ribose 1-diphosphate + AMP + H(+). It functions in the pathway metabolic intermediate biosynthesis; 5-phospho-alpha-D-ribose 1-diphosphate biosynthesis; 5-phospho-alpha-D-ribose 1-diphosphate from D-ribose 5-phosphate (route I): step 1/1. Involved in the biosynthesis of the central metabolite phospho-alpha-D-ribosyl-1-pyrophosphate (PRPP) via the transfer of pyrophosphoryl group from ATP to 1-hydroxyl of ribose-5-phosphate (Rib-5-P). This Buchnera aphidicola subsp. Acyrthosiphon pisum (strain APS) (Acyrthosiphon pisum symbiotic bacterium) protein is Ribose-phosphate pyrophosphokinase.